The chain runs to 83 residues: Exodeoxyribonuclease 7 small subunit (83 aa).

The protein belongs to the XseB family. In terms of assembly, heterooligomer composed of large and small subunits.

It is found in the cytoplasm. The catalysed reaction is Exonucleolytic cleavage in either 5'- to 3'- or 3'- to 5'-direction to yield nucleoside 5'-phosphates.. Functionally, bidirectionally degrades single-stranded DNA into large acid-insoluble oligonucleotides, which are then degraded further into small acid-soluble oligonucleotides. This chain is Exodeoxyribonuclease 7 small subunit, found in Rhodopseudomonas palustris (strain BisB5).